We begin with the raw amino-acid sequence, 304 residues long: MKGKEEKEGGARLGTGGGGSPDKSPSAQELKEQGNRLFVGRKYPEAAACYGRAITRNPLVAVYYTNRALCYLKMQQPEQALADCRRALELDGQSVKAHFFLGQCQLEMESYDEAIANLQRAYSLAKEQRLNFGDDIPSALRIAKKKRWNSIEERRIHQESELHSYLTRLIAAERERELEECQRNHEGHEDDGHIRAQQACIEAKHDKYMADMDELFSQVDEKRKKRDIPDYLCGKISFELMREPCITPSGITYDRKDIEEHLQRVGHFDPVTRSPLTQEQLIPNLAMKEVIDAFISENGWVEDY.

Residues 1 to 10 (MKGKEEKEGG) show a composition bias toward basic and acidic residues. A disordered region spans residues 1–30 (MKGKEEKEGGARLGTGGGGSPDKSPSAQEL). Residue Lys-2 forms a Glycyl lysine isopeptide (Lys-Gly) (interchain with G-Cter in ubiquitin) linkage. The span at 11–20 (ARLGTGGGGS) shows a compositional bias: gly residues. Phosphoserine is present on Ser-20. Lys-23 participates in a covalent cross-link: Glycyl lysine isopeptide (Lys-Gly) (interchain with G-Cter in ubiquitin). Residues Ser-24 and Ser-26 each carry the phosphoserine modification. 3 TPR repeats span residues 27–60 (AQEL…NPLV), 61–94 (AVYY…DGQS), and 96–128 (KAHF…AKEQ). Residues 102-201 (GQCQLEMESY…GHIRAQQACI (100 aa)) are required for interaction with MAPK7. The segment at 143-197 (AKKKRWNSIEERRIHQESELHSYLTRLIAAERERELEECQRNHEGHEDDGHIRAQ) is required for interaction with and ubiquitination of MYOCD. Residues 144-198 (KKKRWNSIEERRIHQESELHSYLTRLIAAERERELEECQRNHEGHEDDGHIRAQQ) form a required for interaction with FOXO1 region. Positions 144-304 (KKKRWNSIEE…ISENGWVEDY (161 aa)) are required for ubiquitination of FOXO1. Ser-150 carries the post-translational modification Phosphoserine. Glycyl lysine isopeptide (Lys-Gly) (interchain with G-Cter in ubiquitin) cross-links involve residues Lys-222 and Lys-256. The U-box domain occupies 227 to 301 (DIPDYLCGKI…DAFISENGWV (75 aa)). Position 274 is a phosphoserine (Ser-274).

In terms of assembly, homodimer. Interacts with BAG2, and with the E2 ubiquitin conjugating enzymes UBE2D1, UBE2D2 and UBE2D3. Detected in a ternary complex containing STUB1, HSPA1A and HSPBP1. Part of a complex composed of STUB1/CHIP, VCP/p97, CHRNA3, and UBXN2A that modulates the ubiquitination and endoplasmic reticulum-associated degradation (ERAD) of CHRNA3. Within the complex UBXN2A acts as a scaffold protein required for the interaction of CHRNA3 with VCP/p97, this interaction also inhibits CHRNA3 ubiquitination by STUB1/CHIP and subsequently ERAD. Interacts with MKKS. Interacts with DNAAF4. Interacts (via the U-box domain) with the UBE2V2-UBE2N heterodimer; the complex has a specific 'Lys-63'-linked polyubiquitination activity. Interacts (when monoubiquitinated) with ATXN3. Interacts with UBE2W. Interacts with DNAJB6. Interacts with FLCN and HSP90AA1. Interacts with HSP90. Interacts with UBE2N and UBE2V1. Interacts (via TPR repeats) with HSPA8 (via C-terminus). Interacts (via TPR repeats) with HSPA1A (via C-terminus). Interacts with the non-acetylated form of HSPA1A and HSPA1B. Interacts with SMAD3 and HSP90AB1. Interacts with UBE4B. Interacts with PRMT5. Interacts with MYOCD (via C-terminus). Interacts with FOXO1 (when phosphorylated on 'Ser-253'). Interacts with MAPK7/ERK5; the interaction is enhanced in the presence of IGF1 or MAP2K5 and promotes STUB1/CHIP E3 ligase activity. Interacts with and ubiquitinates ESR1; the interaction is promoted in the absence of estradiol (17-beta-estradiol/E2). Interacts with ESR2. Interacts with and ubiquitinates NFATC3; HSPA1A/HSP70 is required as a co-chaperone. In macrophages, interacts with PAQR3; the interaction promotes PPARG poylubiquitination and STUB1-mediated degradation. Component of the chaperone-assisted selective autophagy (CASA) complex consisting of BAG3, HSPA8/HSC70, HSPB8 and STUB1/CHIP. Post-translationally, auto-ubiquitinated; mediated by UBE2D1 and UBE2D2 and enhanced in the presence of MAP2K5. Monoubiquitinated at Lys-2 following cell stress by UBE2W, promoting the interaction with ATXN3. Expressed in the brain.

The protein localises to the cytoplasm. The protein resides in the nucleus. Its subcellular location is the mitochondrion. The catalysed reaction is S-ubiquitinyl-[E2 ubiquitin-conjugating enzyme]-L-cysteine + [acceptor protein]-L-lysine = [E2 ubiquitin-conjugating enzyme]-L-cysteine + N(6)-ubiquitinyl-[acceptor protein]-L-lysine.. It functions in the pathway protein modification; protein ubiquitination. E3 ubiquitin-protein ligase which targets misfolded chaperone substrates towards proteasomal degradation. Plays a role in the maintenance of mitochondrial morphology and promotes mitophagic removal of dysfunctional mitochondria; thereby acts as a protector against apoptosis in response to cellular stress. Negatively regulates vascular smooth muscle contraction, via degradation of the transcriptional activator MYOCD and subsequent loss of transcription of genes involved in vascular smooth muscle contraction. Promotes survival and proliferation of cardiac smooth muscle cells via ubiquitination and degradation of FOXO1, resulting in subsequent repression of FOXO1-mediated transcription of pro-apoptotic genes. Ubiquitinates ICER-type isoforms of CREM and targets them for proteasomal degradation, thereby acts as a positive effector of MAPK/ERK-mediated inhibition of apoptosis in cardiomyocytes. Inhibits lipopolysaccharide-induced apoptosis and hypertrophy in cardiomyocytes, via ubiquitination and subsequent proteasomal degradation of NFATC3. Collaborates with ATXN3 in the degradation of misfolded chaperone substrates: ATXN3 restricting the length of ubiquitin chain attached to STUB1/CHIP substrates and preventing further chain extension. Ubiquitinates NOS1 in concert with Hsp70 and Hsp40. Modulates the activity of several chaperone complexes, including Hsp70, Hsc70 and Hsp90. Ubiquitinates CHRNA3 targeting it for endoplasmic reticulum-associated degradation in cortical neurons, as part of the STUB1-VCP-UBXN2A complex. Ubiquitinates and promotes ESR1 proteasomal degradation in response to age-related circulating estradiol (17-beta-estradiol/E2) decline, thereby promotes neuronal apoptosis in response to ischemic reperfusion injury. Mediates transfer of non-canonical short ubiquitin chains to HSPA8 that have no effect on HSPA8 degradation. Mediates polyubiquitination of DNA polymerase beta (POLB) at 'Lys-41', 'Lys-61' and 'Lys-81', thereby playing a role in base-excision repair: catalyzes polyubiquitination by amplifying the HUWE1/ARF-BP1-dependent monoubiquitination and leading to POLB-degradation by the proteasome. Mediates polyubiquitination of CYP3A4. Ubiquitinates EPHA2 and may regulate the receptor stability and activity through proteasomal degradation. Acts as a co-chaperone for HSPA1A and HSPA1B chaperone proteins and promotes ubiquitin-mediated protein degradation. Negatively regulates the suppressive function of regulatory T-cells (Treg) during inflammation by mediating the ubiquitination and degradation of FOXP3 in a HSPA1A/B-dependent manner. Catalyzes monoubiquitination of SIRT6, preventing its degradation by the proteasome. Likely mediates polyubiquitination and down-regulates plasma membrane expression of PD-L1/CD274, an immune inhibitory ligand critical for immune tolerance to self and antitumor immunity. Negatively regulates TGF-beta signaling by modulating the basal level of SMAD3 via ubiquitin-mediated degradation. Plays a role in the degradation of TP53. Mediates ubiquitination of RIPK3 leading to its subsequent proteasome-dependent degradation. May regulate myosin assembly in striated muscles together with UBE4B and VCP/p97 by targeting myosin chaperone UNC45B for proteasomal degradation. Ubiquitinates PPARG in macrophages playing a role in M2 macrophages polarization and angiogenesis. In Mus musculus (Mouse), this protein is E3 ubiquitin-protein ligase CHIP.